The primary structure comprises 417 residues: Phosphoribosylamine--glycine ligase (417 aa).

The region spanning 107-313 (KQIMAKYEIP…FLEIIEATLE (207 aa)) is the ATP-grasp domain. 133–194 (LKETWYPVVI…EEMLYGKEAS (62 aa)) provides a ligand contact to ATP. 2 residues coordinate Mg(2+): glutamate 283 and asparagine 285.

It belongs to the GARS family. Requires Mg(2+) as cofactor. Mn(2+) is required as a cofactor.

The enzyme catalyses 5-phospho-beta-D-ribosylamine + glycine + ATP = N(1)-(5-phospho-beta-D-ribosyl)glycinamide + ADP + phosphate + H(+). It participates in purine metabolism; IMP biosynthesis via de novo pathway; N(1)-(5-phospho-D-ribosyl)glycinamide from 5-phospho-alpha-D-ribose 1-diphosphate: step 2/2. The polypeptide is Phosphoribosylamine--glycine ligase (Caldanaerobacter subterraneus subsp. tengcongensis (strain DSM 15242 / JCM 11007 / NBRC 100824 / MB4) (Thermoanaerobacter tengcongensis)).